The following is a 298-amino-acid chain: tRNA pseudouridine synthase B (298 aa).

The Nucleophile role is filled by Asp-39.

It belongs to the pseudouridine synthase TruB family. Type 1 subfamily.

It carries out the reaction uridine(55) in tRNA = pseudouridine(55) in tRNA. Its function is as follows. Responsible for synthesis of pseudouridine from uracil-55 in the psi GC loop of transfer RNAs. This Lactobacillus delbrueckii subsp. bulgaricus (strain ATCC BAA-365 / Lb-18) protein is tRNA pseudouridine synthase B.